A 796-amino-acid polypeptide reads, in one-letter code: Probable phosphoketolase 2 (796 aa).

It belongs to the XFP family. The cofactor is thiamine diphosphate.

The protein is Probable phosphoketolase 2 of Lactiplantibacillus plantarum (strain ATCC BAA-793 / NCIMB 8826 / WCFS1) (Lactobacillus plantarum).